The following is a 1340-amino-acid chain: MGAELSLLAPTAQPIALSVYVDFLSNIQYNKPLGTSRFLKTVKGLNDQGSIVVKVLVKPNSGLDLSEWVEKLEFLRLKLLDVPNVIPYNLVIDSVRAGYLIRPFQQRTLYERVSIQPYLEPIEKKWIAFQLIHAVMECHERGQYHGDIKSENVLLTSWDMVFLTDFAPFKPIYLPGNNPSQFSFYFDTSRRNVCYVAPERFLGEGTPTQYQEVDKLTSSMDIFSLGCTVAELFLEGSVLFTLPQLFKYKKGEYTPSLSGIVDNDLRNMIQEMIDLDPRKRISAHDCLRKHRGKVFPEYFYSFLYDYMLELSTPSDHSVGNWRFDECDRRIERIYNDMGMICDKLDVNLDLNIVHSFTEEPSQNVIPMTLRLPGVEPHIPQSSKTPYDSALIILNILLHSMRNTTHSSYRIKSCDLILMISEMLSDEQKLDRCLPYLVHLLNDPSIDVQAAALKYMTQLLLLVDYLTPVNVLIFPEYILPKLASFLSTTKGSYMRMIFATILPHLAKTALKFYEMAILLGSHVEKFELLKNFENLTIQLLIDPDSSAKISLLKNILPLASVFGKDKTNDIILSHMITYLNDPDENLRVAFIESILGLSIFVGITSLENYILPLLVQTLTDNSEIVVVNVLRSFAELNNLGLIKKRYKFDLIKVSSKLLLHPNSWIRLGTLRLLISVVKDLSLTDFYCLLYPLVRPFFEYEVTNFDWATLYPCIIKPIPRSIYTLSITWALKAEKTLFWQQVKLAKPDPFGSRNSTFLLNRNSKIGESGVVSNNQIPTSPEDIGWLGKLKASGFDEKDLWKIATLRDYIFRVARSRSNIPTQENNEVTMQQMGIYPRIVFFEKGSMYETEGFVTGSSMMANYRILVNSEYSPESLTKRKTVGGVNTNHTYSGANPYILKFLECIKFRHVLDDSEEFGPSIPSATVEEGHWKFEGVLVSHLTEHTGSITSLALSPDQQYFLTGDSKGIIRLWDVLQLERNGYATSHVTVSMSSSVKDIKFIENRNSFCAVTADGEIKIFRVEINSTSSSVRSNGSPHRHESISLLREHSLEGEHISDMKFIGPNLAVTTLSCKLILFDLRDMQIAEEIQNPVSHGFITSFDLDSSQSWLLIGTSKGILDFYDLRFELLVKSWKLKSTSYPIKHITVPPAGFTCNRKSERFALINGGTNDSVTIVFDVSKGQCSELYFTETVNLNTAIDNYEVLEVDNGEERTRTSVLATEVEDRSITSLTMLGSNQFLTATFDKRVILWDTGNKANSSALISKLDDFTSSFSSVQVRPHLMAINEKIVEKDPQDIGGPKRNMASANSSTFDLHSDIITGIAVIQKPLKMLILVDRAGVINIYK.

The N-myristoyl glycine moiety is linked to residue Gly-2. One can recognise a Protein kinase domain in the interval 27–303 (IQYNKPLGTS…VFPEYFYSFL (277 aa)). Residues 33 to 41 (LGTSRFLKT) and Lys-54 contribute to the ATP site. The active-site Proton acceptor is Asp-147. HEAT repeat units follow at residues 432-470 (CLPY…PVNV) and 570-608 (ILSH…LENY). WD repeat units lie at residues 940–979 (EHTG…RNGY), 987–1026 (SMSS…TSSS), 1089–1128 (VSHG…LVKS), 1133–1182 (STSY…CSEL), 1218–1256 (VEDR…NSSA), and 1309–1340 (LHSD…NIYK).

This sequence belongs to the protein kinase superfamily. Ser/Thr protein kinase family.

It localises to the golgi apparatus. Its subcellular location is the trans-Golgi network membrane. The protein localises to the endosome membrane. The catalysed reaction is L-seryl-[protein] + ATP = O-phospho-L-seryl-[protein] + ADP + H(+). It catalyses the reaction L-threonyl-[protein] + ATP = O-phospho-L-threonyl-[protein] + ADP + H(+). Functionally, involved in glucose-induced micropexophagy and ethanol-induced macropexophagy. Required for ATG2 recruitment to a perivacuolar compartment. This chain is Putative serine/threonine-protein kinase VPS15 (VPS15), found in Komagataella pastoris (Yeast).